The following is a 377-amino-acid chain: Glutamate 5-kinase (377 aa).

Lysine 20 contacts ATP. Positions 60, 147, and 159 each coordinate substrate. Residue 179–180 (SD) participates in ATP binding. The region spanning 281–355 (HGQLHLDAGA…GQSTSDLPEF (75 aa)) is the PUA domain.

It belongs to the glutamate 5-kinase family.

The protein localises to the cytoplasm. The catalysed reaction is L-glutamate + ATP = L-glutamyl 5-phosphate + ADP. It participates in amino-acid biosynthesis; L-proline biosynthesis; L-glutamate 5-semialdehyde from L-glutamate: step 1/2. Its function is as follows. Catalyzes the transfer of a phosphate group to glutamate to form L-glutamate 5-phosphate. This is Glutamate 5-kinase from Corynebacterium jeikeium (strain K411).